A 422-amino-acid chain; its full sequence is Probable tRNA pseudouridine synthase D (422 aa).

D83 (nucleophile) is an active-site residue. Positions 164-386 (GFPNYFGSQR…AGGRRELLIK (223 aa)) constitute a TRUD domain.

The protein belongs to the pseudouridine synthase TruD family.

The enzyme catalyses uridine(13) in tRNA = pseudouridine(13) in tRNA. Functionally, could be responsible for synthesis of pseudouridine from uracil-13 in transfer RNAs. The polypeptide is Probable tRNA pseudouridine synthase D (Thermococcus sibiricus (strain DSM 12597 / MM 739)).